A 109-amino-acid chain; its full sequence is Large ribosomal subunit protein uL24 (109 aa).

The protein belongs to the universal ribosomal protein uL24 family. Part of the 50S ribosomal subunit.

Its function is as follows. One of two assembly initiator proteins, it binds directly to the 5'-end of the 23S rRNA, where it nucleates assembly of the 50S subunit. Functionally, one of the proteins that surrounds the polypeptide exit tunnel on the outside of the subunit. This is Large ribosomal subunit protein uL24 from Rickettsia canadensis (strain McKiel).